Consider the following 75-residue polypeptide: Small ribosomal subunit protein bS18 (75 aa).

It belongs to the bacterial ribosomal protein bS18 family. In terms of assembly, part of the 30S ribosomal subunit. Forms a tight heterodimer with protein bS6.

Functionally, binds as a heterodimer with protein bS6 to the central domain of the 16S rRNA, where it helps stabilize the platform of the 30S subunit. In Thermosipho melanesiensis (strain DSM 12029 / CIP 104789 / BI429), this protein is Small ribosomal subunit protein bS18.